Reading from the N-terminus, the 459-residue chain is Bifunctional protein GlmU (459 aa).

Positions 1-229 (MTNYAIILAA…FDESLGVNDR (229 aa)) are pyrophosphorylase. Residues 8-11 (LAAG), K22, Q72, and 77-78 (GT) each bind UDP-N-acetyl-alpha-D-glucosamine. Residue D102 participates in Mg(2+) binding. Positions 139, 154, 169, and 227 each coordinate UDP-N-acetyl-alpha-D-glucosamine. Position 227 (N227) interacts with Mg(2+). The linker stretch occupies residues 230–250 (VALAKAEKVMRRRINHAHMVN). The interval 251–459 (GVTLTNPAST…KKKPHHPNNK (209 aa)) is N-acetyltransferase. Residues R332 and K350 each coordinate UDP-N-acetyl-alpha-D-glucosamine. The Proton acceptor role is filled by H362. Residues Y365 and N376 each coordinate UDP-N-acetyl-alpha-D-glucosamine. Residues A379, 385 to 386 (NY), S404, A422, and R439 each bind acetyl-CoA.

The protein in the N-terminal section; belongs to the N-acetylglucosamine-1-phosphate uridyltransferase family. It in the C-terminal section; belongs to the transferase hexapeptide repeat family. As to quaternary structure, homotrimer. Mg(2+) is required as a cofactor.

It is found in the cytoplasm. The catalysed reaction is alpha-D-glucosamine 1-phosphate + acetyl-CoA = N-acetyl-alpha-D-glucosamine 1-phosphate + CoA + H(+). It catalyses the reaction N-acetyl-alpha-D-glucosamine 1-phosphate + UTP + H(+) = UDP-N-acetyl-alpha-D-glucosamine + diphosphate. It participates in nucleotide-sugar biosynthesis; UDP-N-acetyl-alpha-D-glucosamine biosynthesis; N-acetyl-alpha-D-glucosamine 1-phosphate from alpha-D-glucosamine 6-phosphate (route II): step 2/2. It functions in the pathway nucleotide-sugar biosynthesis; UDP-N-acetyl-alpha-D-glucosamine biosynthesis; UDP-N-acetyl-alpha-D-glucosamine from N-acetyl-alpha-D-glucosamine 1-phosphate: step 1/1. The protein operates within bacterial outer membrane biogenesis; LPS lipid A biosynthesis. Catalyzes the last two sequential reactions in the de novo biosynthetic pathway for UDP-N-acetylglucosamine (UDP-GlcNAc). The C-terminal domain catalyzes the transfer of acetyl group from acetyl coenzyme A to glucosamine-1-phosphate (GlcN-1-P) to produce N-acetylglucosamine-1-phosphate (GlcNAc-1-P), which is converted into UDP-GlcNAc by the transfer of uridine 5-monophosphate (from uridine 5-triphosphate), a reaction catalyzed by the N-terminal domain. In Streptococcus mutans serotype c (strain ATCC 700610 / UA159), this protein is Bifunctional protein GlmU.